Reading from the N-terminus, the 308-residue chain is Ribosomal RNA large subunit methyltransferase F (308 aa).

Belongs to the methyltransferase superfamily. METTL16/RlmF family.

The protein localises to the cytoplasm. The enzyme catalyses adenosine(1618) in 23S rRNA + S-adenosyl-L-methionine = N(6)-methyladenosine(1618) in 23S rRNA + S-adenosyl-L-homocysteine + H(+). Its function is as follows. Specifically methylates the adenine in position 1618 of 23S rRNA. The chain is Ribosomal RNA large subunit methyltransferase F from Escherichia coli O127:H6 (strain E2348/69 / EPEC).